Here is a 162-residue protein sequence, read N- to C-terminus: uncharacterized protein (162 aa).

An N-terminal signal peptide occupies residues 1 to 21 (MEGIMKKFFALMTLIAGISFS). The stretch at 32 to 118 (VIRESKFIAK…KKAELEKMVF (87 aa)) forms a coiled coil.

The protein belongs to the Skp family.

This is an uncharacterized protein from Aquifex aeolicus (strain VF5).